A 73-amino-acid chain; its full sequence is Mu-scoloptoxin(15)-Ssd1a (73 aa).

A signal peptide spans 1–20 (MKFHIIFCLLAALMMTSAFA).

In terms of processing, contains 2 disulfide bonds. In terms of tissue distribution, expressed by the venom gland.

It localises to the secreted. Voltage-gated sodium channel inhibitor. This is Mu-scoloptoxin(15)-Ssd1a from Scolopendra dehaani (Thai centipede).